Reading from the N-terminus, the 297-residue chain is MNLGTLVSETRNPQTMDLDALPTPELVKRFNEQDTLVAEAVKATLPDVARAVDAAAAALKSGGRIIYMGAGTSGRLGVLDASECPPTFGVPHGLVVGLIAGGPGALLKAVEGAEDSQQAGEDDLVALNLQEQDLVVGLAASGRTPYVIGGLRYARQSGCTTVAVSCNPDSPIAREANIAISPVVGPEALTGSTRLKSGTAQKMVLNMISTGAMVKFGKVYQNLMVDMKATNVKLVDRACRMVVEATGIGREEAETLLKQTDFEVKPAILMALTGLDAAAAREKLAAHQGFLRAALEH.

The 164-residue stretch at 55 to 218 (AAAALKSGGR…STGAMVKFGK (164 aa)) folds into the SIS domain. Catalysis depends on E83, which acts as the Proton donor. Residue E114 is part of the active site.

Belongs to the GCKR-like family. MurNAc-6-P etherase subfamily. As to quaternary structure, homodimer.

The catalysed reaction is N-acetyl-D-muramate 6-phosphate + H2O = N-acetyl-D-glucosamine 6-phosphate + (R)-lactate. It participates in amino-sugar metabolism; 1,6-anhydro-N-acetylmuramate degradation. Its pathway is amino-sugar metabolism; N-acetylmuramate degradation. It functions in the pathway cell wall biogenesis; peptidoglycan recycling. Specifically catalyzes the cleavage of the D-lactyl ether substituent of MurNAc 6-phosphate, producing GlcNAc 6-phosphate and D-lactate. Together with AnmK, is also required for the utilization of anhydro-N-acetylmuramic acid (anhMurNAc) either imported from the medium or derived from its own cell wall murein, and thus plays a role in cell wall recycling. The chain is N-acetylmuramic acid 6-phosphate etherase from Salmonella schwarzengrund (strain CVM19633).